Consider the following 127-residue polypeptide: MQIINVVYSFLFAAAMLPVVHSLGINCRGSSQCGLSGGNLMVRIRDQACGNQGQTWCPGERRAKVCGTGNSISAYVQSTNNCISGTEACRHLTNLVNHGCRVCGSDPLYAGNDVSRGQLTVNYVNSC.

The signal sequence occupies residues 1–22; sequence MQIINVVYSFLFAAAMLPVVHS. Disulfide bonds link C27-C100, C33-C103, C49-C89, C57-C82, and C66-C127.

In terms of assembly, monomer.

Its subcellular location is the secreted. Its function is as follows. This protein is lethal to sensitive cells of the same or related species. It specifically inhibits voltage-gated calcium channels. It inhibits cell growth and division by blocking calcium import. This Mycosarcoma maydis (Corn smut fungus) protein is KP4 killer toxin (M2A).